The following is a 244-amino-acid chain: tRNA pseudouridine synthase B (244 aa).

Aspartate 46 acts as the Nucleophile in catalysis.

Belongs to the pseudouridine synthase TruB family. Type 1 subfamily.

It catalyses the reaction uridine(55) in tRNA = pseudouridine(55) in tRNA. Its function is as follows. Responsible for synthesis of pseudouridine from uracil-55 in the psi GC loop of transfer RNAs. The chain is tRNA pseudouridine synthase B from Bordetella avium (strain 197N).